The sequence spans 228 residues: PKHD-type hydroxylase XC_1340 (228 aa).

Residues 78–180 form the Fe2OG dioxygenase domain; the sequence is RIYPPLFNRY…RVASFFWIQS (103 aa). The Fe cation site is built by His96, Asp98, and His161. Arg171 contributes to the 2-oxoglutarate binding site.

Fe(2+) serves as cofactor. Requires L-ascorbate as cofactor.

The sequence is that of PKHD-type hydroxylase XC_1340 from Xanthomonas campestris pv. campestris (strain 8004).